The chain runs to 494 residues: UDP-N-acetylmuramate--L-alanine ligase (494 aa).

Residue 134 to 140 (GSHGKTT) participates in ATP binding.

Belongs to the MurCDEF family.

It is found in the cytoplasm. The catalysed reaction is UDP-N-acetyl-alpha-D-muramate + L-alanine + ATP = UDP-N-acetyl-alpha-D-muramoyl-L-alanine + ADP + phosphate + H(+). It participates in cell wall biogenesis; peptidoglycan biosynthesis. Cell wall formation. The polypeptide is UDP-N-acetylmuramate--L-alanine ligase (Prochlorococcus marinus (strain NATL1A)).